Reading from the N-terminus, the 298-residue chain is Probable endonuclease 4 (298 aa).

Histidine 69, histidine 111, glutamate 146, aspartate 180, histidine 183, histidine 215, aspartate 228, histidine 230, and glutamate 260 together coordinate Zn(2+).

It belongs to the AP endonuclease 2 family. Zn(2+) is required as a cofactor.

The enzyme catalyses Endonucleolytic cleavage to 5'-phosphooligonucleotide end-products.. Endonuclease IV plays a role in DNA repair. It cleaves phosphodiester bonds at apurinic or apyrimidinic (AP) sites, generating a 3'-hydroxyl group and a 5'-terminal sugar phosphate. The sequence is that of Probable endonuclease 4 from Bacillus cereus (strain 03BB102).